The primary structure comprises 1170 residues: Short transient receptor potential channel 2 (1170 aa).

Residues 1 to 627 (MLMSLTDSKE…GWRGSTTIWK (627 aa)) are Cytoplasmic-facing. 3 disordered regions span residues 64–113 (SLSD…QTST), 142–231 (AHKA…QATG), and 322–342 (ESGS…VEES). Residues 74 to 85 (SPGSSGLNQNSS) show a composition bias toward polar residues. The segment covering 158–177 (GEPDSSHPERAEPRAEEPNR) has biased composition (basic and acidic residues). ANK repeat units lie at residues 300–329 (KFPP…DPSG), 346–376 (SWRE…DFRQ), 377–405 (IHEA…REKG), and 429–458 (PGVT…TIAR). The helical transmembrane segment at 628 to 648 (LFVAFLIFLTMPFLCIGYWLA) threads the bilayer. The Extracellular portion of the chain corresponds to 649–658 (PKSRLGRLLK). The helical transmembrane segment at 659–679 (IPVLKFLLHSASYLWFLIFLL) threads the bilayer. The Cytoplasmic segment spans residues 680 to 701 (GESLVMETQLSTFKGRSQSVWE). The chain crosses the membrane as a helical span at residues 702–722 (TSLHMIWVTGFLWFECKEVWI). Residues 723–737 (EGLRSYLLDWWNFLD) are Extracellular-facing. A helical membrane pass occupies residues 738 to 758 (VVILSLYLASFALRLLLAGLA). Residues 759–788 (YMHCRDASDSSTCRYFTTAERSEWRTEDPQ) lie on the Cytoplasmic side of the membrane. A helical transmembrane segment spans residues 789 to 809 (FLAEVLFAVTSMLSFTRLAYI). The Extracellular portion of the chain corresponds to 810–832 (LPAHESLGTLQISIGKMIDDMIR). A helical transmembrane segment spans residues 833-853 (FMFILMIILTAFLCGLNNIYV). At 854–898 (PYQETEKLGNFNETFQFLFWTMFGMEEHSVVDMPQFLVPEFVGRA) the chain is on the cytoplasmic side. Residues 899-919 (MYGIFTIVMVIVLLNMLIAMI) traverse the membrane as a helical segment. Residues 920–1170 (TNSFQKIEDD…GEDLETKGES (251 aa)) are Extracellular-facing. The stretch at 1030–1068 (RREFEETRRKDLGNRLTELTKTVSRLQSEVASVQKTVAA) forms a coiled coil. The interval 1118–1170 (LEDSLDATGEAGTPASGESSSSSSAHVLVHREQEAEGAGDLPLGEDLETKGES) is disordered.

This sequence belongs to the transient receptor (TC 1.A.4) family. STrpC subfamily. TRPC2 sub-subfamily. In terms of tissue distribution, expressed exclusively in vomeronasal organ neurons (sensory microvilli).

Its subcellular location is the membrane. Functionally, thought to form a receptor-activated calcium permeant cation channel. Probably is operated by a phosphatidylinositol second messenger system activated by receptor tyrosine kinases or G-protein coupled receptors. Is not activated by intracellular calcium store depletion. This Rattus norvegicus (Rat) protein is Short transient receptor potential channel 2 (Trpc2).